The primary structure comprises 490 residues: Betaine aldehyde dehydrogenase (490 aa).

K(+) is bound at residue Asn-93. An NAD(+)-binding site is contributed by 150 to 152 (GAW). Lys-162 functions as the Charge relay system in the catalytic mechanism. Residue 176-179 (KPSE) coordinates NAD(+). Val-180 serves as a coordination point for K(+). 230-233 (GTAT) contacts NAD(+). A K(+)-binding site is contributed by Leu-246. Glu-252 serves as the catalytic Proton acceptor. 3 residues coordinate NAD(+): Gly-254, Cys-286, and Glu-387. The active-site Nucleophile is the Cys-286. Cys-286 is subject to Cysteine sulfenic acid (-SOH). Residues Lys-457 and Gly-460 each coordinate K(+). The Charge relay system role is filled by Glu-464.

This sequence belongs to the aldehyde dehydrogenase family. As to quaternary structure, dimer of dimers. It depends on K(+) as a cofactor.

The catalysed reaction is betaine aldehyde + NAD(+) + H2O = glycine betaine + NADH + 2 H(+). Its pathway is amine and polyamine biosynthesis; betaine biosynthesis via choline pathway; betaine from betaine aldehyde: step 1/1. Functionally, involved in the biosynthesis of the osmoprotectant glycine betaine. Catalyzes the irreversible oxidation of betaine aldehyde to the corresponding acid. This Xanthomonas campestris pv. campestris (strain ATCC 33913 / DSM 3586 / NCPPB 528 / LMG 568 / P 25) protein is Betaine aldehyde dehydrogenase.